A 253-amino-acid chain; its full sequence is Retinoic acid early-inducible protein 1-gamma (253 aa).

The N-terminal stretch at 1–28 (MAKAAVTKRHHFMIQKLLILLSYGYTNG) is a signal peptide. Cysteines 37 and 56 form a disulfide. N-linked (GlcNAc...) asparagine glycans are attached at residues asparagine 38, asparagine 70, asparagine 83, asparagine 143, and asparagine 156. An intrachain disulfide couples cysteine 90 to cysteine 190. The tract at residues 198-230 (LKQSKEKPRSTSRSPSITQLTSTSPLPPPSHST) is disordered. The span at 211–221 (SPSITQLTSTS) shows a compositional bias: low complexity. Serine 227 carries the GPI-anchor amidated serine lipid modification. Residues 228–253 (HSTSKKGFISVGLIFISLLFAFAFAM) constitute a propeptide, removed in mature form.

This sequence belongs to the NKG2D ligand family. In terms of processing, glycosylated. As to expression, expressed predominantly in embryonic brain.

It is found in the cell membrane. Acts as a ligand for KLRK1. The sequence is that of Retinoic acid early-inducible protein 1-gamma (Raet1c) from Mus musculus (Mouse).